A 234-amino-acid polypeptide reads, in one-letter code: uncharacterized protein (234 aa).

Residues 65 to 89 (QNANRQEGRRRGLRPSSDGNLRREN) are disordered. The RING-type zinc-finger motif lies at 185-220 (CAVCLHNKVCVLFQKCKHVITCGPCSLRIKECPVCK).

It belongs to the IIV-6 175R/332L family.

This is an uncharacterized protein from Acheta domesticus (House cricket).